The following is an 81-amino-acid chain: Exodeoxyribonuclease 7 small subunit (81 aa).

The protein belongs to the XseB family. As to quaternary structure, heterooligomer composed of large and small subunits.

Its subcellular location is the cytoplasm. The enzyme catalyses Exonucleolytic cleavage in either 5'- to 3'- or 3'- to 5'-direction to yield nucleoside 5'-phosphates.. In terms of biological role, bidirectionally degrades single-stranded DNA into large acid-insoluble oligonucleotides, which are then degraded further into small acid-soluble oligonucleotides. The polypeptide is Exodeoxyribonuclease 7 small subunit (Rhodopseudomonas palustris (strain BisA53)).